Here is a 99-residue protein sequence, read N- to C-terminus: Co-chaperonin GroES (99 aa).

This sequence belongs to the GroES chaperonin family. In terms of assembly, heptamer of 7 subunits arranged in a ring. Interacts with the chaperonin GroEL.

The protein resides in the cytoplasm. Functionally, together with the chaperonin GroEL, plays an essential role in assisting protein folding. The GroEL-GroES system forms a nano-cage that allows encapsulation of the non-native substrate proteins and provides a physical environment optimized to promote and accelerate protein folding. GroES binds to the apical surface of the GroEL ring, thereby capping the opening of the GroEL channel. This is Co-chaperonin GroES from Corynebacterium glutamicum (strain R).